The sequence spans 302 residues: Sulfate adenylyltransferase subunit 2 (302 aa).

Belongs to the PAPS reductase family. CysD subfamily. As to quaternary structure, heterodimer composed of CysD, the smaller subunit, and CysN.

The enzyme catalyses sulfate + ATP + H(+) = adenosine 5'-phosphosulfate + diphosphate. The protein operates within sulfur metabolism; hydrogen sulfide biosynthesis; sulfite from sulfate: step 1/3. In terms of biological role, with CysN forms the ATP sulfurylase (ATPS) that catalyzes the adenylation of sulfate producing adenosine 5'-phosphosulfate (APS) and diphosphate, the first enzymatic step in sulfur assimilation pathway. APS synthesis involves the formation of a high-energy phosphoric-sulfuric acid anhydride bond driven by GTP hydrolysis by CysN coupled to ATP hydrolysis by CysD. The sequence is that of Sulfate adenylyltransferase subunit 2 from Zymomonas mobilis subsp. mobilis (strain ATCC 31821 / ZM4 / CP4).